We begin with the raw amino-acid sequence, 447 residues long: Trigger factor (447 aa).

The PPIase FKBP-type domain maps to 164-249 (GDLVVIDFIG…VKEVKQAVVP (86 aa)).

This sequence belongs to the FKBP-type PPIase family. Tig subfamily.

The protein resides in the cytoplasm. The catalysed reaction is [protein]-peptidylproline (omega=180) = [protein]-peptidylproline (omega=0). Involved in protein export. Acts as a chaperone by maintaining the newly synthesized protein in an open conformation. Functions as a peptidyl-prolyl cis-trans isomerase. This chain is Trigger factor, found in Rhodospirillum rubrum (strain ATCC 11170 / ATH 1.1.1 / DSM 467 / LMG 4362 / NCIMB 8255 / S1).